Reading from the N-terminus, the 156-residue chain is MKLHILAVGHKMPDWIATGFDEYTKRMPPELRIELREIKPEQRSSGRQADSVMAAERLKIEAALPKNARIVALDERGKDWTTMQLAGALPGWQQDGRDVAFLIGGADGLDPQLKARSDMLLRVSSLTLPHAMVRVLLAEQLYRAWTITQNHPYHRV.

S-adenosyl-L-methionine is bound by residues leucine 73, glycine 104, and 123–128 (VSSLTL).

The protein belongs to the RNA methyltransferase RlmH family. In terms of assembly, homodimer.

It is found in the cytoplasm. It carries out the reaction pseudouridine(1915) in 23S rRNA + S-adenosyl-L-methionine = N(3)-methylpseudouridine(1915) in 23S rRNA + S-adenosyl-L-homocysteine + H(+). Its function is as follows. Specifically methylates the pseudouridine at position 1915 (m3Psi1915) in 23S rRNA. The polypeptide is Ribosomal RNA large subunit methyltransferase H (Paraburkholderia phytofirmans (strain DSM 17436 / LMG 22146 / PsJN) (Burkholderia phytofirmans)).